The primary structure comprises 242 residues: MVATAEGEPGLTDALARLAGSGRADMPDLELLPGSYDLPGARLLDVVEVMDRIRLACPWSARRTHHDLVKYGVEEMYELVDAIEAGDRGELREELGDVLLQVVFHARIAQDDADEPFAIDDVAGTLVTKLVHRHPHVFGDDVAETAADVEAHWRRRKAEEKHERTSVTEGVPLGQPALALAAKLASRARAAGIAVRPEECGTGVGYRLLEMAVGAEADGVDPESALRAAAHVYRDAIRAAEG.

To E.coli MazG and to plasmid pIP1100 erythromycin esterase.

This is an uncharacterized protein from Streptomyces cacaoi.